We begin with the raw amino-acid sequence, 393 residues long: NAD(P)H-quinone oxidoreductase subunit H, chloroplastic (393 aa).

Belongs to the complex I 49 kDa subunit family. In terms of assembly, NDH is composed of at least 16 different subunits, 5 of which are encoded in the nucleus.

Its subcellular location is the plastid. It localises to the chloroplast thylakoid membrane. The enzyme catalyses a plastoquinone + NADH + (n+1) H(+)(in) = a plastoquinol + NAD(+) + n H(+)(out). It catalyses the reaction a plastoquinone + NADPH + (n+1) H(+)(in) = a plastoquinol + NADP(+) + n H(+)(out). In terms of biological role, NDH shuttles electrons from NAD(P)H:plastoquinone, via FMN and iron-sulfur (Fe-S) centers, to quinones in the photosynthetic chain and possibly in a chloroplast respiratory chain. The immediate electron acceptor for the enzyme in this species is believed to be plastoquinone. Couples the redox reaction to proton translocation, and thus conserves the redox energy in a proton gradient. The protein is NAD(P)H-quinone oxidoreductase subunit H, chloroplastic of Cicer arietinum (Chickpea).